Consider the following 78-residue polypeptide: D-alanyl carrier protein (78 aa).

One can recognise a Carrier domain in the interval Met-1–Arg-78. Ser-36 is subject to O-(pantetheine 4'-phosphoryl)serine.

Belongs to the DltC family. In terms of processing, 4'-phosphopantetheine is transferred from CoA to a specific serine of apo-DCP.

The protein localises to the cytoplasm. Its pathway is cell wall biogenesis; lipoteichoic acid biosynthesis. Its function is as follows. Carrier protein involved in the D-alanylation of lipoteichoic acid (LTA). The loading of thioester-linked D-alanine onto DltC is catalyzed by D-alanine--D-alanyl carrier protein ligase DltA. The DltC-carried D-alanyl group is further transferred to cell membrane phosphatidylglycerol (PG) by forming an ester bond, probably catalyzed by DltD. D-alanylation of LTA plays an important role in modulating the properties of the cell wall in Gram-positive bacteria, influencing the net charge of the cell wall. In Staphylococcus aureus (strain Mu50 / ATCC 700699), this protein is D-alanyl carrier protein.